Here is a 216-residue protein sequence, read N- to C-terminus: Probable transaldolase (216 aa).

The active-site Schiff-base intermediate with substrate is Lys83.

The protein belongs to the transaldolase family. Type 3B subfamily.

The protein resides in the cytoplasm. It catalyses the reaction D-sedoheptulose 7-phosphate + D-glyceraldehyde 3-phosphate = D-erythrose 4-phosphate + beta-D-fructose 6-phosphate. The protein operates within carbohydrate degradation; pentose phosphate pathway; D-glyceraldehyde 3-phosphate and beta-D-fructose 6-phosphate from D-ribose 5-phosphate and D-xylulose 5-phosphate (non-oxidative stage): step 2/3. Transaldolase is important for the balance of metabolites in the pentose-phosphate pathway. The sequence is that of Probable transaldolase from Clostridioides difficile (strain 630) (Peptoclostridium difficile).